A 214-amino-acid chain; its full sequence is MDAPVLYAELHLANTQGLRCTSPPSPRQDACWGSGWHRVALKLGCVGLILLLMGLSVLVGFLVQKPPIEKCSVAVQENKTEPTVRSTILECPRDWHLHWNKCLFISQTSRPWAEGLADCSLRGATLLLIGDGKELKLLQDFSKGKGQQFFIGLKYVQEDKVWKWMNGSILNTNLLRITGKNEENSCALISHTEVFSDSCSSDNHWICQKTLKRV.

The Cytoplasmic portion of the chain corresponds to 1–42; the sequence is MDAPVLYAELHLANTQGLRCTSPPSPRQDACWGSGWHRVALK. Residues 43 to 63 traverse the membrane as a helical; Signal-anchor for type II membrane protein segment; it reads LGCVGLILLLMGLSVLVGFLV. Over 64–214 the chain is Extracellular; it reads QKPPIEKCSV…WICQKTLKRV (151 aa). Positions 98–208 constitute a C-type lectin domain; sequence HWNKCLFISQ…CSSDNHWICQ (111 aa). Cystine bridges form between cysteine 119-cysteine 207 and cysteine 186-cysteine 199.

It localises to the membrane. In Rattus norvegicus (Rat), this protein is Killer cell lectin-like receptor subfamily B member 1 (Klrb1).